A 336-amino-acid chain; its full sequence is Atypical chemokine receptor 1 (336 aa).

Positions 1-30 (MGNCLHRAELSPSTENSSQLDFEDVWNSSY) are mediates Plasmodium vivax Duffy receptor (PVDR) binding. Residues 1-63 (MGNCLHRAEL…CNLLDDSALP (63 aa)) are Extracellular-facing. The N-linked (GlcNAc...) asparagine glycan is linked to asparagine 16. Tyrosine 30 carries the post-translational modification Sulfotyrosine. A glycan (N-linked (GlcNAc...) asparagine) is linked at asparagine 33. Tyrosine 41 is subject to Sulfotyrosine. Disulfide bonds link cysteine 51–cysteine 276 and cysteine 129–cysteine 195. The helical transmembrane segment at 64–84 (FFILTSVLGILASSTVLFMLF) threads the bilayer. Over 85–95 (RPLFRWQLCPG) the chain is Cytoplasmic. A helical membrane pass occupies residues 96 to 116 (WPVLAQLAVGSALFSIVVPVL). The Extracellular portion of the chain corresponds to 117-129 (APGLGSTRSSALC). A helical transmembrane segment spans residues 130-153 (SLGYCVWYGSAFAQALLLGCHASL). Residues 154 to 166 (GHRLGAGQVPGLT) are Cytoplasmic-facing. The helical transmembrane segment at 167 to 187 (LGLTVGIWGVAALLTLPVTLA) threads the bilayer. The Extracellular portion of the chain corresponds to 188–207 (SGASGGLCTLIYSTELKALQ). Residues 208–228 (ATHTVACLAIFVLLPLGLFGA) form a helical membrane-spanning segment. Over 229-244 (KGLKKALGMGPGPWMN) the chain is Cytoplasmic. Residues 245–265 (ILWAWFIFWWPHGVVLGLDFL) form a helical membrane-spanning segment. At 266–287 (VRSKLLLLSTCLAQQALDLLLN) the chain is on the extracellular side. Residues 288–308 (LAEALAILHCVATPLLLALFC) traverse the membrane as a helical segment. Residues 309–336 (HQATRTLLPSLPLPEGWSSHLDTLGSKS) are Cytoplasmic-facing.

Belongs to the G-protein coupled receptor 1 family. Atypical chemokine receptor subfamily. (Microbial infection) Interacts (via N-terminal extracellular domain) with Plasmodium vivax Duffy receptor (PVDR) (via PvRII region). As to quaternary structure, (Microbial infection) Interacts (via N-terminal extracellular domain) with Plasmodium knowlesi Duffy receptor alpha form (DBPalpha) (via region II). Sulfation at Tyr-41 facilitates interaction with MGSA/CXCL1, RANTES/CCL5 and MCP-1/CCL2 but not IL8/CXCL8. Sulfation at Tyr-30 facilitates interaction with IL8/CXCL8. In terms of processing, (Microbial infection) Sulfation at Tyr-41 facilitates interaction with Plasmodium vivax Duffy receptor (PVDR). Sulfation at Tyr-30/Tyr-41 and Tyr-41 alone increases binding affinity of Plasmodium vivax parasites and likely promotes invasion of red blood cells. Post-translationally, (Microbial infection) Sulfation at Tyr-41 facilitates interaction with Plasmodium knowlesi Duffy receptor alpha form (DBPalpha). Sulfation at Tyr-30/Tyr-41 and Tyr-41 alone increases binding affinity of Plasmodium knowlesi parasites and likely promotes invasion of red blood cells. Found in adult kidney, adult spleen, bone marrow and fetal liver. In particular, it is expressed along postcapillary venules throughout the body, except in the adult liver. Erythroid cells and postcapillary venule endothelium are the principle tissues expressing duffy. Fy(-A-B) individuals do not express duffy in the bone marrow, however they do, in postcapillary venule endothelium.

The protein resides in the early endosome. Its subcellular location is the recycling endosome. It is found in the membrane. Atypical chemokine receptor that controls chemokine levels and localization via high-affinity chemokine binding that is uncoupled from classic ligand-driven signal transduction cascades, resulting instead in chemokine sequestration, degradation, or transcytosis. Also known as interceptor (internalizing receptor) or chemokine-scavenging receptor or chemokine decoy receptor. Has a promiscuous chemokine-binding profile, interacting with inflammatory chemokines of both the CXC and the CC subfamilies but not with homeostatic chemokines. Acts as a receptor for chemokines including CCL2, CCL5, CCL7, CCL11, CCL13, CCL14, CCL17, CXCL5, CXCL6, IL8/CXCL8, CXCL11, GRO, RANTES, MCP-1 and TARC. May regulate chemokine bioavailability and, consequently, leukocyte recruitment through two distinct mechanisms: when expressed in endothelial cells, it sustains the abluminal to luminal transcytosis of tissue-derived chemokines and their subsequent presentation to circulating leukocytes; when expressed in erythrocytes, serves as blood reservoir of cognate chemokines but also as a chemokine sink, buffering potential surges in plasma chemokine levels. Its function is as follows. (Microbial infection) Acts as a receptor for the malaria parasite Plasmodium vivax. Functionally, (Microbial infection) Acts as a receptor for the malaria parasite Plasmodium knowlesi. The protein is Atypical chemokine receptor 1 (ACKR1) of Homo sapiens (Human).